A 107-amino-acid chain; its full sequence is Apolipoprotein E (107 aa).

A run of 5 repeats spans residues 11–32 (ALMDETMKELKAYKSELEEQLS), 33–54 (PVAEETRARLSKELQAAQARLG), 55–76 (ADMEDVRSRLAQYRSEVQAMLG), 77–98 (QSTDELRARLASHLRKLRKRLL), and 99–107 (RDVDDLQKR). The tract at residues 11–107 (ALMDETMKEL…LRDVDDLQKR (97 aa)) is 5 X 22 AA approximate tandem repeats. Met74 bears the Methionine sulfoxide mark. At Ser78 the chain carries Phosphoserine. The interval 89 to 99 (HLRKLRKRLLR) is LDL and other lipoprotein receptors binding. Position 93–96 (93–96 (LRKR)) interacts with heparin.

Belongs to the apolipoprotein A1/A4/E family. In terms of assembly, homotetramer. May interact with ABCA1; functionally associated with ABCA1 in the biogenesis of HDLs. May interact with APP/A4 amyloid-beta peptide; the interaction is extremely stable in vitro but its physiological significance is unclear. May interact with MAPT. May interact with MAP2. In the cerebrospinal fluid, interacts with secreted SORL1. Interacts with PMEL; this allows the loading of PMEL luminal fragment on ILVs to induce fibril nucleation. In terms of processing, APOE exists as multiple glycosylated and sialylated glycoforms within cells and in plasma. The extent of glycosylation and sialylation are tissue and context specific. Post-translationally, glycated in plasma VLDL. Phosphorylated by FAM20C in the extracellular medium.

The protein localises to the secreted. It localises to the extracellular space. The protein resides in the extracellular matrix. Its subcellular location is the extracellular vesicle. It is found in the endosome. The protein localises to the multivesicular body. Its function is as follows. APOE is an apolipoprotein, a protein associating with lipid particles, that mainly functions in lipoprotein-mediated lipid transport between organs via the plasma and interstitial fluids. APOE is a core component of plasma lipoproteins and is involved in their production, conversion and clearance. Apolipoproteins are amphipathic molecules that interact both with lipids of the lipoprotein particle core and the aqueous environment of the plasma. As such, APOE associates with chylomicrons, chylomicron remnants, very low density lipoproteins (VLDL) and intermediate density lipoproteins (IDL) but shows a preferential binding to high-density lipoproteins (HDL). It also binds a wide range of cellular receptors including the LDL receptor/LDLR, the LDL receptor-related proteins LRP1, LRP2 and LRP8 and the very low-density lipoprotein receptor/VLDLR that mediate the cellular uptake of the APOE-containing lipoprotein particles. Finally, APOE also has a heparin-binding activity and binds heparan-sulfate proteoglycans on the surface of cells, a property that supports the capture and the receptor-mediated uptake of APOE-containing lipoproteins by cells. A main function of APOE is to mediate lipoprotein clearance through the uptake of chylomicrons, VLDLs, and HDLs by hepatocytes. APOE is also involved in the biosynthesis by the liver of VLDLs as well as their uptake by peripheral tissues ensuring the delivery of triglycerides and energy storage in muscle, heart and adipose tissues. By participating in the lipoprotein-mediated distribution of lipids among tissues, APOE plays a critical role in plasma and tissues lipid homeostasis. APOE is also involved in two steps of reverse cholesterol transport, the HDLs-mediated transport of cholesterol from peripheral tissues to the liver, and thereby plays an important role in cholesterol homeostasis. First, it is functionally associated with ABCA1 in the biogenesis of HDLs in tissues. Second, it is enriched in circulating HDLs and mediates their uptake by hepatocytes. APOE also plays an important role in lipid transport in the central nervous system, regulating neuron survival and sprouting. This Saimiri sciureus (Common squirrel monkey) protein is Apolipoprotein E (APOE).